The chain runs to 86 residues: Defensin-like protein 259 (86 aa).

Residues 1 to 25 (MKNASLKLPLLIFILVITSNLGAEA) form the signal peptide. Intrachain disulfides connect Cys-60-Cys-76, Cys-66-Cys-83, and Cys-70-Cys-85.

The protein belongs to the DEFL family.

It localises to the secreted. The chain is Defensin-like protein 259 from Arabidopsis thaliana (Mouse-ear cress).